Consider the following 1311-residue polypeptide: Zinc finger protein 521 (1311 aa).

The segment at 47 to 67 (HSCDSCLQVFESLSDITEHKI) adopts a C2H2-type 1; degenerate zinc-finger fold. Residues 81–108 (DPSCSWPASSPSSKDQTSPSHGEGCDFG) form a disordered region. The segment covering 83–102 (SCSWPASSPSSKDQTSPSHG) has biased composition (low complexity). 7 consecutive C2H2-type zinc fingers follow at residues 118–140 (YPCQ…EQSH), 146–168 (FKCT…IKLH), 174–196 (YHCS…LKTH), 202–224 (YKCA…MQVH), 246–269 (QKCS…AECH), 281–304 (LQCM…EQVH), and 310–332 (NSCS…MDSH). Residues 357–398 (TTPDSNLSVDSSTMVEAAPPIPKSRGRKRAAQQTSDMTGPSS) form a disordered region. Composition is skewed to polar residues over residues 359-370 (PDSNLSVDSSTM) and 387-398 (AQQTSDMTGPSS). Residues 405 to 429 (YSCIYCNKQLFSSLAVLQIHLKTMH) form a C2H2-type 9; degenerate zinc finger. 3 C2H2-type zinc fingers span residues 437 to 460 (HICQ…KQVH), 477 to 500 (YQCN…RCSH), and 513 to 536 (FFCP…RQVH). The residue at position 546 (serine 546) is a Phosphoserine. The C2H2-type 13; atypical zinc-finger motif lies at 560–585 (YSCSYCTNSPIFNSVLKLNKHIKENH). Residues serine 605 and serine 608 each carry the phosphoserine modification. C2H2-type zinc fingers lie at residues 634 to 656 (YICN…LKTH), 664 to 686 (LTCP…VTIH), 694 to 717 (YICE…LDMH), 722 to 745 (FRCT…AVKH), 752 to 775 (YRCT…KHNH), 783 to 805 (HKCI…ITTH), and 809 to 832 (YNCR…REKH). Residues 863-883 (TNSQESHNSHDGSEEDVDSSE) form a disordered region. A C2H2-type 21; degenerate zinc finger spans residues 886–908 (YGCDICGAAYTMETLLQNHQLRD). 3 consecutive C2H2-type zinc fingers follow at residues 930-952 (YKCN…MQTH), 959-981 (YMCP…KVTH), and 1020-1042 (FRCV…GTFH). The C2H2-type 25; degenerate zinc-finger motif lies at 1065–1083 (YKCASCLKEFRSKQDLVKL). The segment covering 1105–1119 (PGLSLPPGASRPGLG) has biased composition (low complexity). Positions 1105–1136 (PGLSLPPGASRPGLGQNESLSAMEGKGKAGGL) are disordered. C2H2-type zinc fingers lie at residues 1138–1161 (TRCS…QTVH), 1195–1217 (YQCI…VANH), 1225–1247 (HECK…LIEH), 1256–1279 (FKCP…FSAH), and 1286–1309 (YDCT…MTQH). Lysine 1146 participates in a covalent cross-link: Glycyl lysine isopeptide (Lys-Gly) (interchain with G-Cter in SUMO2).

It belongs to the krueppel C2H2-type zinc-finger protein family. As to quaternary structure, interacts with EBF1. Interacts with SMAD1 and SMAD4. Widely expressed. Expressed in all B-cell stages.

The protein resides in the nucleus. Its function is as follows. Transcription factor that can both act as an activator or a repressor depending on the context. Involved in BMP signaling and in the regulation of the immature compartment of the hematopoietic system. Associates with SMADs in response to BMP2 leading to activate transcription of BMP target genes. Acts as a transcriptional repressor via its interaction with EBF1, a transcription factor involved specification of B-cell lineage; this interaction preventing EBF1 to bind DNA and activate target genes. In Mus musculus (Mouse), this protein is Zinc finger protein 521 (Znf521).